A 53-amino-acid chain; its full sequence is Large ribosomal subunit protein eL40 (53 aa).

Belongs to the eukaryotic ribosomal protein eL40 family.

The sequence is that of Large ribosomal subunit protein eL40 from Pyrobaculum arsenaticum (strain DSM 13514 / JCM 11321 / PZ6).